A 70-amino-acid polypeptide reads, in one-letter code: DNA gyrase inhibitor YacG (70 aa).

4 residues coordinate Zn(2+): C9, C12, C28, and C32. Residues 43 to 70 (ESRKIPGSSIDPESIVTSNNKQDNVDEQ) are disordered.

Belongs to the DNA gyrase inhibitor YacG family. Interacts with GyrB. It depends on Zn(2+) as a cofactor.

In terms of biological role, inhibits all the catalytic activities of DNA gyrase by preventing its interaction with DNA. Acts by binding directly to the C-terminal domain of GyrB, which probably disrupts DNA binding by the gyrase. This chain is DNA gyrase inhibitor YacG, found in Legionella pneumophila (strain Lens).